The primary structure comprises 230 residues: Thymidylate kinase (230 aa).

An ATP-binding site is contributed by 20 to 27 (GGEGAGKS).

It belongs to the thymidylate kinase family.

It carries out the reaction dTMP + ATP = dTDP + ADP. In terms of biological role, phosphorylation of dTMP to form dTDP in both de novo and salvage pathways of dTTP synthesis. The protein is Thymidylate kinase of Rhodopseudomonas palustris (strain TIE-1).